The sequence spans 683 residues: Synaptic vesicle glycoprotein 2B (683 aa).

Residues 1 to 42 (MDDYKYQDNYGGYAPSDGYYRGNESNPEEDAQSDVTEGHDEE) form a disordered region. Residues 1-108 (MDDYKYQDNY…MDECGHGRFQ (108 aa)) are Cytoplasmic-facing. Position 33 is a phosphoserine (serine 33). Position 36 is a phosphothreonine (threonine 36). A helical transmembrane segment spans residues 109 to 129 (WILFFVLGLALMADGVEVFVV). Residues 130–148 (SFALPSAEKDMCLSSSKKG) are Extracellular-facing. Residues 149–169 (MLGMIVYLGMMAGAFILGGLA) form a helical membrane-spanning segment. Residues 170–182 (DKLGRKRVLSMSL) lie on the Cytoplasmic side of the membrane. The helical transmembrane segment at 183-203 (AVNASFASLSSFVQGYGAFLF) threads the bilayer. Residues 204-205 (CR) are Extracellular-facing. Residues 206 to 226 (LISGIGIGGALPIVFAYFSEF) traverse the membrane as a helical segment. The Cytoplasmic portion of the chain corresponds to 227-237 (LSREKRGEHLS). The helical transmembrane segment at 238–258 (WLGIFWMTGGLYASAMAWSII) threads the bilayer. Topologically, residues 259–277 (PHYGWGFSMGTNYHFHSWR) are extracellular. Residues 278 to 298 (VFVIVCALPCTVSMVALKFMP) traverse the membrane as a helical segment. At 299–390 (ESPRFLLEMG…CVMGPYRMNT (92 aa)) the chain is on the cytoplasmic side. The chain crosses the membrane as a helical span at residues 391–411 (LILAVVWFAMAFSYYGLTVWF). The Extracellular segment spans residues 412-535 (PDMIRYFQDE…CHMDLEQDND (124 aa)). A Phosphotyrosine modification is found at tyrosine 423. Residues asparagine 441, asparagine 491, and asparagine 516 are each glycosylated (N-linked (GlcNAc...) asparagine). Residues 536 to 556 (FLIYLVSFLGSLSVLPGNIIS) traverse the membrane as a helical segment. The Cytoplasmic segment spans residues 557–565 (ALLMDRIGR). A helical transmembrane segment spans residues 566–586 (LKMIGGSMLISAVCCFFLFFG). The Extracellular portion of the chain corresponds to 587-592 (NSESAM). A helical transmembrane segment spans residues 593–613 (IGWQCLFCGTSIAAWNALDVI). The Cytoplasmic portion of the chain corresponds to 614-626 (TVELYPTNQRATA). Residues 627–649 (FGILNGLCKFGAILGNTIFASFV) traverse the membrane as a helical segment. Residues 650–653 (GITK) are Extracellular-facing. The chain crosses the membrane as a helical span at residues 654 to 672 (VVPILLAAASLVGGGLIAL). The Cytoplasmic portion of the chain corresponds to 673–683 (RLPETREQVLM).

Belongs to the major facilitator superfamily. In terms of assembly, interacts with SYT1 in a calcium-independent manner. Forms a complex with SYT1, syntaxin-1 and SNAP25. As to quaternary structure, (Microbial infection) Interacts with C.botulinum neurotoxin type A2 (BoNT/A, botA). Interaction is improved by glycosylation of SV2. N-glycosylated. In terms of processing, the N-terminal cytoplasmic domain is phosphorylated by CK1.

It localises to the cytoplasmic vesicle. The protein localises to the secretory vesicle. Its subcellular location is the synaptic vesicle membrane. It is found in the acrosome. Functionally, probably plays a role in the control of regulated secretion in neural and endocrine cells. In terms of biological role, (Microbial infection) Receptor for the C.botulinum neurotoxin type A2 (BoNT/A, botA); glycosylation is not essential but enhances the interaction. Probably also serves as a receptor for the closely related C.botulinum neurotoxin type A1. This chain is Synaptic vesicle glycoprotein 2B (SV2B), found in Homo sapiens (Human).